The following is a 229-amino-acid chain: MSDSQEIPYHNQLKNRFRGYFPVIIDVETAGFDAKKDALLELAAITLKMDENGYLHPDQKCHFHIEPFEGANINPESLKFNGIDIHNPLRGAVSELDAITGLFQMIRRGQKDADCQRSIIVAHNAAFDQSFVMAAAERTGVKRNPFHPFGMFDTASLAGLMFGQTVLVKACLAAKIPFDGKQAHSALYDTERTAELFCYMVNHLKDLGGFPHISQIDETENTAENQTAL.

Residues 23–197 (VIIDVETAGF…YDTERTAELF (175 aa)) enclose the Exonuclease domain. Mg(2+) is bound by residues aspartate 26, glutamate 28, histidine 184, and aspartate 189. Histidine 184 acts as the Proton donor/acceptor in catalysis.

It belongs to the RNase T family. Homodimer. Mg(2+) serves as cofactor.

In terms of biological role, trims short 3' overhangs of a variety of RNA species, leaving a one or two nucleotide 3' overhang. Responsible for the end-turnover of tRNA: specifically removes the terminal AMP residue from uncharged tRNA (tRNA-C-C-A). Also appears to be involved in tRNA biosynthesis. This Haemophilus influenzae (strain PittEE) protein is Ribonuclease T.